A 376-amino-acid polypeptide reads, in one-letter code: Chaperone protein DnaJ (376 aa).

In terms of domain architecture, J spans 5-70 (DYYEVLGVGR…DKKAAYDQFG (66 aa)). Residues 132–210 (GLTKELRIPT…CHGEGRVEKS (79 aa)) form a CR-type zinc finger. Cys-145, Cys-148, Cys-162, Cys-165, Cys-184, Cys-187, Cys-198, and Cys-201 together coordinate Zn(2+). CXXCXGXG motif repeat units lie at residues 145–152 (CDLCDGSG), 162–169 (CGTCHGQG), 184–191 (CPTCHGRG), and 198–205 (CGKCHGEG).

This sequence belongs to the DnaJ family. In terms of assembly, homodimer. The cofactor is Zn(2+).

Its subcellular location is the cytoplasm. Functionally, participates actively in the response to hyperosmotic and heat shock by preventing the aggregation of stress-denatured proteins and by disaggregating proteins, also in an autonomous, DnaK-independent fashion. Unfolded proteins bind initially to DnaJ; upon interaction with the DnaJ-bound protein, DnaK hydrolyzes its bound ATP, resulting in the formation of a stable complex. GrpE releases ADP from DnaK; ATP binding to DnaK triggers the release of the substrate protein, thus completing the reaction cycle. Several rounds of ATP-dependent interactions between DnaJ, DnaK and GrpE are required for fully efficient folding. Also involved, together with DnaK and GrpE, in the DNA replication of plasmids through activation of initiation proteins. The chain is Chaperone protein DnaJ from Shewanella loihica (strain ATCC BAA-1088 / PV-4).